We begin with the raw amino-acid sequence, 308 residues long: MLTFQQIILKLQSYWADQGCALLQPYDMEVGAGTSHTATFLRALGPEPWKAAYVQPSRRPKDGRYGENPNRLQHYYQYQVVLKPAPANILELYLGSLEALGFDLKKNDIRFVEDDWENPTLGAWGLGWEVWLNGMEVTQFTYFQQVGGIDCKPATGEITYGLERLAMYLQGVDNVYNLTWTDGLTYGDVYKQNEVEQSTYNFEHSDTDFLFTAFSAHEKQAKHLVEQQLALPAYEQVLKAGHSFNLLDARGAISVTERAAYIGRIRNLARAVAQSYYESRERLGFPLAPREWVEQMTKTSKTTTKKGA.

Belongs to the class-II aminoacyl-tRNA synthetase family. As to quaternary structure, tetramer of two alpha and two beta subunits.

Its subcellular location is the cytoplasm. The catalysed reaction is tRNA(Gly) + glycine + ATP = glycyl-tRNA(Gly) + AMP + diphosphate. This chain is Glycine--tRNA ligase alpha subunit, found in Polaromonas naphthalenivorans (strain CJ2).